The sequence spans 303 residues: Regulatory protein PocR (303 aa).

Residues 195-293 (KKALRYIDAH…QVTPQAYRQQ (99 aa)) form the HTH araC/xylS-type domain. 2 consecutive DNA-binding regions (H-T-H motif) follow at residues 212–233 (EDVA…KKYQ) and 260–283 (IASI…RQTY).

It participates in cofactor biosynthesis; adenosylcobalamin biosynthesis [regulation]. The protein operates within polyol metabolism; 1,2-propanediol degradation [regulation]. Its function is as follows. Positive regulatory protein of pdu and cob operons. Positively autoregulates its own expression. The polypeptide is Regulatory protein PocR (pocR) (Salmonella typhimurium (strain LT2 / SGSC1412 / ATCC 700720)).